The sequence spans 678 residues: Proprotein convertase subtilisin/kexin type 4 (678 aa).

The first 26 residues, methionine 1–alanine 26, serve as a signal peptide directing secretion. Residues arginine 27 to arginine 110 constitute a propeptide that is removed on maturation. One can recognise a Peptidase S8 domain in the interval glutamine 123–valine 437. Residues aspartate 155, histidine 196, and serine 370 each act as charge relay system in the active site. The P/Homo B domain occupies threonine 446–aspartate 580. A glycan (N-linked (GlcNAc...) asparagine) is linked at asparagine 472.

Belongs to the peptidase S8 family. Furin subfamily. As to quaternary structure, the proPCSK4 form interacts with HSPA5; the interaction takes place at the endoplasmic reticulum. In terms of processing, N-glycosylated. Post-translationally, synthesized in the endoplasmic reticulum as a zymogen, is matured by autocatalytic cleavage between the prodomain and the catalytic domain. As to expression, expressed abundantly in the testis. High levels seen in germ cells but not in Leydig, Sertoli or peritubular cells. Expressed in the pachytene spermatocytes and the round spermatids but not in the elongating spermatids. May be expressed within hormonally stimulated ovaries.

Its subcellular location is the cytoplasmic vesicle. It localises to the secretory vesicle. The protein localises to the acrosome membrane. Proprotein convertase involved in the processing of hormone and other protein precursors at sites comprised of pairs of basic amino acid residues. In males, important for ADAM2 processing as well as other acrosomal proteins with roles in fertilization and critical for normal fertilization events such as sperm capacitation, acrosome reaction and binding of sperm to zona pellucida. Plays also a role in female fertility, involved in the regulation of trophoblast migration and placental development, may be through the proteolytical processing and activation of proteins such as IGF2. May also participate in folliculogenesis in the ovaries. This is Proprotein convertase subtilisin/kexin type 4 (Pcsk4) from Rattus norvegicus (Rat).